The chain runs to 364 residues: Anhydro-N-acetylmuramic acid kinase (364 aa).

11-18 (GSSLDGID) provides a ligand contact to ATP.

It belongs to the anhydro-N-acetylmuramic acid kinase family.

The enzyme catalyses 1,6-anhydro-N-acetyl-beta-muramate + ATP + H2O = N-acetyl-D-muramate 6-phosphate + ADP + H(+). It participates in amino-sugar metabolism; 1,6-anhydro-N-acetylmuramate degradation. It functions in the pathway cell wall biogenesis; peptidoglycan recycling. In terms of biological role, catalyzes the specific phosphorylation of 1,6-anhydro-N-acetylmuramic acid (anhMurNAc) with the simultaneous cleavage of the 1,6-anhydro ring, generating MurNAc-6-P. Is required for the utilization of anhMurNAc either imported from the medium or derived from its own cell wall murein, and thus plays a role in cell wall recycling. This Pseudomonas savastanoi pv. phaseolicola (strain 1448A / Race 6) (Pseudomonas syringae pv. phaseolicola (strain 1448A / Race 6)) protein is Anhydro-N-acetylmuramic acid kinase.